The following is a 654-amino-acid chain: Cytochrome B pre-mRNA-processing protein 1 (654 aa).

The protein resides in the mitochondrion. Functionally, responsible for conferring a stable 5'-end on cytochrome b mRNA. The protein is Cytochrome B pre-mRNA-processing protein 1 (CBP1) of Saccharomyces cerevisiae (strain ATCC 204508 / S288c) (Baker's yeast).